A 552-amino-acid chain; its full sequence is Amino-acid acetyltransferase, mitochondrial (552 aa).

The N-terminal 32 residues, 1–32, are a transit peptide targeting the mitochondrion; sequence MIKTWIRCLTTEVRYHQPNAHGRSLVMSVLNS. The N-acetyltransferase domain maps to 379-545; the sequence is QTGKSDPVSK…LRDYAKYVRD (167 aa).

It belongs to the acetyltransferase family.

The protein localises to the mitochondrion. The catalysed reaction is L-glutamate + acetyl-CoA = N-acetyl-L-glutamate + CoA + H(+). The protein operates within amino-acid biosynthesis; L-arginine biosynthesis; N(2)-acetyl-L-ornithine from L-glutamate: step 1/4. In terms of biological role, N-acetylglutamate synthase involved in arginine biosynthesis. The sequence is that of Amino-acid acetyltransferase, mitochondrial (ARG2) from Kluyveromyces lactis (strain ATCC 8585 / CBS 2359 / DSM 70799 / NBRC 1267 / NRRL Y-1140 / WM37) (Yeast).